The chain runs to 179 residues: Large ribosomal subunit protein uL6 (179 aa).

The protein belongs to the universal ribosomal protein uL6 family. In terms of assembly, part of the 50S ribosomal subunit.

This protein binds to the 23S rRNA, and is important in its secondary structure. It is located near the subunit interface in the base of the L7/L12 stalk, and near the tRNA binding site of the peptidyltransferase center. This is Large ribosomal subunit protein uL6 from Rhodococcus jostii (strain RHA1).